A 118-amino-acid polypeptide reads, in one-letter code: Vesicle-associated membrane protein 1 (118 aa).

The segment at 1–36 is disordered; sequence MSAPAQPPAEGTEGTAPGGGPPGPPPNMTSNRRLQQ. The Cytoplasmic segment spans residues 1 to 96; the sequence is MSAPAQPPAE…KRKYWWKNCK (96 aa). Residues 33–93 form the v-SNARE coiled-coil homology domain; sequence RLQQTQAQVE…AKLKRKYWWK (61 aa). Serine 63 bears the Phosphoserine mark. The helical; Anchor for type IV membrane protein transmembrane segment at 97–116 threads the bilayer; that stretch reads MMIMLGAICAIIVVVIVIYF. The Vesicular portion of the chain corresponds to 117-118; it reads FT.

It belongs to the synaptobrevin family. Interacts with VAPA and VAPB. In terms of processing, (Microbial infection) Targeted and hydrolyzed by C.botulinum neurotoxin type B (BoNT/B, botB) which probably hydrolyzes the 78-Gln-|-Phe-79 bond and inhibits neurotransmitter release. Post-translationally, (Microbial infection) Targeted and hydrolyzed by C.botulinum neurotoxin type D (BoNT/D, botD) which probably hydrolyzes the 61-Arg-|-Leu-62 bond and inhibits neurotransmitter release. BoNT/D has low catalytic activity on this protein due to its sequence. Note that humans are not known to be infected by C.botulinum type D. (Microbial infection) Targeted and hydrolyzed by C.botulinum neurotoxin type F (BoNT/F, botF) which probably hydrolyzes the 60-Gln-|-Lys-61 bond and inhibits neurotransmitter release. In terms of processing, (Microbial infection) Targeted and hydrolyzed by C.botulinum neurotoxin type X (BoNT/X) which probably hydrolyzes the 68-Arg-|-Ala-69 bond and inhibits neurotransmitter release. It remains unknown whether BoNT/X is ever produced, or what organisms it targets. As to expression, nervous system, skeletal muscle and adipose tissue.

Its subcellular location is the cytoplasmic vesicle. The protein localises to the secretory vesicle. It localises to the synaptic vesicle membrane. It is found in the synapse. The protein resides in the synaptosome. Its subcellular location is the cytoplasmic vesicle membrane. The protein localises to the mitochondrion outer membrane. Its function is as follows. Involved in the targeting and/or fusion of transport vesicles to their target membrane. The protein is Vesicle-associated membrane protein 1 (VAMP1) of Homo sapiens (Human).